Reading from the N-terminus, the 579-residue chain is Nuclear hormone receptor family member nhr-22 (579 aa).

The nuclear receptor DNA-binding region spans serine 93–alanine 173. NR C4-type zinc fingers lie at residues cysteine 96–cysteine 117 and cysteine 133–cysteine 161. The span at leucine 233–proline 242 shows a compositional bias: low complexity. Residues leucine 233–threonine 256 are disordered. The NR LBD domain maps to glutamate 304–arginine 577.

The protein belongs to the nuclear hormone receptor family.

The protein localises to the nucleus. Its function is as follows. Orphan nuclear receptor. This Caenorhabditis elegans protein is Nuclear hormone receptor family member nhr-22 (nhr-22).